The chain runs to 198 residues: Recombination protein RecR (198 aa).

The C4-type zinc-finger motif lies at C57–C72. Positions S80–S175 constitute a Toprim domain.

This sequence belongs to the RecR family.

Its function is as follows. May play a role in DNA repair. It seems to be involved in an RecBC-independent recombinational process of DNA repair. It may act with RecF and RecO. The protein is Recombination protein RecR of Staphylococcus saprophyticus subsp. saprophyticus (strain ATCC 15305 / DSM 20229 / NCIMB 8711 / NCTC 7292 / S-41).